Here is a 351-residue protein sequence, read N- to C-terminus: UDP-3-O-acylglucosamine N-acyltransferase (351 aa).

Residue His-240 is the Proton acceptor of the active site.

It belongs to the transferase hexapeptide repeat family. LpxD subfamily. In terms of assembly, homotrimer.

The catalysed reaction is a UDP-3-O-[(3R)-3-hydroxyacyl]-alpha-D-glucosamine + a (3R)-hydroxyacyl-[ACP] = a UDP-2-N,3-O-bis[(3R)-3-hydroxyacyl]-alpha-D-glucosamine + holo-[ACP] + H(+). It functions in the pathway bacterial outer membrane biogenesis; LPS lipid A biosynthesis. Catalyzes the N-acylation of UDP-3-O-acylglucosamine using 3-hydroxyacyl-ACP as the acyl donor. Is involved in the biosynthesis of lipid A, a phosphorylated glycolipid that anchors the lipopolysaccharide to the outer membrane of the cell. This Pseudomonas fluorescens (strain ATCC BAA-477 / NRRL B-23932 / Pf-5) protein is UDP-3-O-acylglucosamine N-acyltransferase.